The sequence spans 776 residues: DNA topoisomerase 1 (776 aa).

Residues 1–111 (MKLVIVESPA…VKSDDFFKRV (111 aa)) enclose the Toprim domain. Glu-7 and Asp-80 together coordinate Mg(2+). Residues 132–568 (DANLVNAQQA…FWSGFNHNIE (437 aa)) form the Topo IA-type catalytic domain. Residues 166 to 171 (SAGRVQ) form an interaction with DNA region. Tyr-304 (O-(5'-phospho-DNA)-tyrosine intermediate) is an active-site residue. Residues 600-627 (CPSCKTGELSLKLGKFGAFLACSNYPEC) form a C4-type zinc finger.

The protein belongs to the type IA topoisomerase family. As to quaternary structure, monomer. Mg(2+) is required as a cofactor.

The enzyme catalyses ATP-independent breakage of single-stranded DNA, followed by passage and rejoining.. Its function is as follows. Releases the supercoiling and torsional tension of DNA, which is introduced during the DNA replication and transcription, by transiently cleaving and rejoining one strand of the DNA duplex. Introduces a single-strand break via transesterification at a target site in duplex DNA. The scissile phosphodiester is attacked by the catalytic tyrosine of the enzyme, resulting in the formation of a DNA-(5'-phosphotyrosyl)-enzyme intermediate and the expulsion of a 3'-OH DNA strand. The free DNA strand then undergoes passage around the unbroken strand, thus removing DNA supercoils. Finally, in the religation step, the DNA 3'-OH attacks the covalent intermediate to expel the active-site tyrosine and restore the DNA phosphodiester backbone. This Rickettsia felis (strain ATCC VR-1525 / URRWXCal2) (Rickettsia azadi) protein is DNA topoisomerase 1.